The primary structure comprises 228 residues: uncharacterized protein (228 aa).

This is an uncharacterized protein from Archaeoglobus fulgidus (strain ATCC 49558 / DSM 4304 / JCM 9628 / NBRC 100126 / VC-16).